Reading from the N-terminus, the 418-residue chain is Hydroxysqualene dehydroxylase (418 aa).

It belongs to the HpnE family.

The catalysed reaction is squalene + FAD + H2O + H(+) = hydroxysqualene + FADH2. The protein operates within secondary metabolite biosynthesis; hopanoid biosynthesis. Its function is as follows. Involved in the biosynthesis of the hopanoid precursor squalene (SQ) from farnesyl diphosphate (FPP). Catalyzes the third (last) step, the reduction of hydroxysqualene (HSQ) to SQ. The protein is Hydroxysqualene dehydroxylase of Rhodopseudomonas palustris (strain ATCC BAA-98 / CGA009).